A 255-amino-acid polypeptide reads, in one-letter code: MRILCTNDDGVHAPGLKIVEEIARALSDDVWVVAPELDQSGVSHSLSLNDPLRLREIGPRHFAVRGTPTDCVIMGARHILGDKGPDLVLSGVNKGRNVAEDVVYSGTIAGALEGTILGIPSFALSQEYSHDSRSAPLWETALAHGPKILRKALDAGVPKNTVINVNFPACAPEEVAGVLVTRQGKRNQGFLRVDERRDGRGNPYFWIGFERVVVVDTPAEGTDLAALAARYISVTPLKLDRTDEGFSEALRSTLA.

4 residues coordinate a divalent metal cation: D8, D9, S40, and N93.

Belongs to the SurE nucleotidase family. The cofactor is a divalent metal cation.

It is found in the cytoplasm. The enzyme catalyses a ribonucleoside 5'-phosphate + H2O = a ribonucleoside + phosphate. Functionally, nucleotidase that shows phosphatase activity on nucleoside 5'-monophosphates. In Rhodopseudomonas palustris (strain BisA53), this protein is 5'-nucleotidase SurE.